Consider the following 191-residue polypeptide: MGKRASKLKPEEVEELKQQTYFTEAEIKQWHKGFRKDCPDGKLTLEGFTKIYQQFFPFGDPSKFANFVFNVFDENKDGFISFGEFLQALSVTSRGTVEEKLKWAFRLYDLDNDGFITRDELLDIVDAIYRMVGESVRLPEEENTPEKRVNRIFQVMDKNKDDKLTFDEFLEGSKEDPTIIQALTLCDSGQA.

The N-myristoyl glycine moiety is linked to residue Gly2. 4 EF-hand domains span residues 24-59, 60-95, 96-131, and 144-179; these read EAEIKQWHKGFRKDCPDGKLTLEGFTKIYQQFFPFG, DPSKFANFVFNVFDENKDGFISFGEFLQALSVTSRG, TVEEKLKWAFRLYDLDNDGFITRDELLDIVDAIYRM, and TPEKRVNRIFQVMDKNKDDKLTFDEFLEGSKEDPTI. Asp73, Asn75, Asp77, Glu84, Asp109, Asp111, Asp113, Glu120, Asp157, Asn159, Asp161, Lys163, and Glu168 together coordinate Ca(2+).

This sequence belongs to the recoverin family.

Its function is as follows. Neuronal calcium sensor, regulator of G protein-coupled receptor phosphorylation in a calcium dependent manner. Regulates neurite extension and branching by activity-dependent (Ca2+) influx in growth cones. This Aplysia californica (California sea hare) protein is Neuronal calcium sensor 1.